We begin with the raw amino-acid sequence, 428 residues long: Phosphomethylpyrimidine synthase 2 (428 aa).

Substrate contacts are provided by residues M94, Y123, H162, 184–186 (SRG), 225–228 (NGMR), and E264. Residue H268 coordinates Zn(2+). Y291 serves as a coordination point for substrate. Residue H332 participates in Zn(2+) binding. C408, C411, and C415 together coordinate [4Fe-4S] cluster.

Belongs to the ThiC family. Requires [4Fe-4S] cluster as cofactor.

The enzyme catalyses 5-amino-1-(5-phospho-beta-D-ribosyl)imidazole + S-adenosyl-L-methionine = 4-amino-2-methyl-5-(phosphooxymethyl)pyrimidine + CO + 5'-deoxyadenosine + formate + L-methionine + 3 H(+). It functions in the pathway cofactor biosynthesis; thiamine diphosphate biosynthesis. In terms of biological role, catalyzes the synthesis of the hydroxymethylpyrimidine phosphate (HMP-P) moiety of thiamine from aminoimidazole ribotide (AIR) in a radical S-adenosyl-L-methionine (SAM)-dependent reaction. The sequence is that of Phosphomethylpyrimidine synthase 2 from Methanosarcina mazei (strain ATCC BAA-159 / DSM 3647 / Goe1 / Go1 / JCM 11833 / OCM 88) (Methanosarcina frisia).